The primary structure comprises 466 residues: 3-isopropylmalate dehydratase large subunit (466 aa).

[4Fe-4S] cluster-binding residues include Cys347, Cys407, and Cys410.

Belongs to the aconitase/IPM isomerase family. LeuC type 1 subfamily. In terms of assembly, heterodimer of LeuC and LeuD. Requires [4Fe-4S] cluster as cofactor.

The enzyme catalyses (2R,3S)-3-isopropylmalate = (2S)-2-isopropylmalate. It participates in amino-acid biosynthesis; L-leucine biosynthesis; L-leucine from 3-methyl-2-oxobutanoate: step 2/4. Its function is as follows. Catalyzes the isomerization between 2-isopropylmalate and 3-isopropylmalate, via the formation of 2-isopropylmaleate. The chain is 3-isopropylmalate dehydratase large subunit from Cronobacter sakazakii (strain ATCC BAA-894) (Enterobacter sakazakii).